Reading from the N-terminus, the 469-residue chain is Ribulose bisphosphate carboxylase large chain (469 aa).

Lys-5 is subject to N6,N6,N6-trimethyllysine. Substrate-binding residues include Asn-114 and Thr-164. Lys-166 functions as the Proton acceptor in the catalytic mechanism. Lys-168 is a substrate binding site. Mg(2+)-binding residues include Lys-192, Asp-194, and Glu-195. Lys-192 carries the post-translational modification N6-carboxylysine. Residue His-285 is the Proton acceptor of the active site. Substrate is bound by residues Arg-286, His-318, and Ser-370.

This sequence belongs to the RuBisCO large chain family. Type I subfamily. In terms of assembly, heterohexadecamer of 8 large chains and 8 small chains; disulfide-linked. The disulfide link is formed within the large subunit homodimers. Requires Mg(2+) as cofactor. Post-translationally, the disulfide bond which can form in the large chain dimeric partners within the hexadecamer appears to be associated with oxidative stress and protein turnover.

It localises to the plastid. The protein resides in the chloroplast. The catalysed reaction is 2 (2R)-3-phosphoglycerate + 2 H(+) = D-ribulose 1,5-bisphosphate + CO2 + H2O. The enzyme catalyses D-ribulose 1,5-bisphosphate + O2 = 2-phosphoglycolate + (2R)-3-phosphoglycerate + 2 H(+). Functionally, ruBisCO catalyzes two reactions: the carboxylation of D-ribulose 1,5-bisphosphate, the primary event in carbon dioxide fixation, as well as the oxidative fragmentation of the pentose substrate in the photorespiration process. Both reactions occur simultaneously and in competition at the same active site. In Cephalanthus occidentalis (Common buttonbush), this protein is Ribulose bisphosphate carboxylase large chain.